A 441-amino-acid chain; its full sequence is Ribosomal protein uS12 methylthiotransferase RimO (441 aa).

An MTTase N-terminal domain is found at 8–118; that stretch reads PKIGFVSLGC…VLEHVHHYVP (111 aa). Residues Cys17, Cys53, Cys82, Cys150, Cys154, and Cys157 each contribute to the [4Fe-4S] cluster site. One can recognise a Radical SAM core domain in the interval 136–373; it reads LTPRHYAYLK…MQLQQQISAE (238 aa). Residues 376–441 form the TRAM domain; the sequence is QEKVGREILV…DEYDLWGSRV (66 aa).

This sequence belongs to the methylthiotransferase family. RimO subfamily. [4Fe-4S] cluster is required as a cofactor.

It localises to the cytoplasm. It carries out the reaction L-aspartate(89)-[ribosomal protein uS12]-hydrogen + (sulfur carrier)-SH + AH2 + 2 S-adenosyl-L-methionine = 3-methylsulfanyl-L-aspartate(89)-[ribosomal protein uS12]-hydrogen + (sulfur carrier)-H + 5'-deoxyadenosine + L-methionine + A + S-adenosyl-L-homocysteine + 2 H(+). In terms of biological role, catalyzes the methylthiolation of an aspartic acid residue of ribosomal protein uS12. The polypeptide is Ribosomal protein uS12 methylthiotransferase RimO (Shigella sonnei (strain Ss046)).